We begin with the raw amino-acid sequence, 368 residues long: tRNA(Met) cytidine acetate ligase (368 aa).

ATP contacts are provided by residues 7-20 (IAEFNPFHNGHKYL), Gly96, Asn152, and Arg175.

Belongs to the TmcAL family.

It is found in the cytoplasm. It catalyses the reaction cytidine(34) in elongator tRNA(Met) + acetate + ATP = N(4)-acetylcytidine(34) in elongator tRNA(Met) + AMP + diphosphate. In terms of biological role, catalyzes the formation of N(4)-acetylcytidine (ac(4)C) at the wobble position of elongator tRNA(Met), using acetate and ATP as substrates. First activates an acetate ion to form acetyladenylate (Ac-AMP) and then transfers the acetyl group to tRNA to form ac(4)C34. The protein is tRNA(Met) cytidine acetate ligase of Streptococcus pyogenes serotype M4 (strain MGAS10750).